A 133-amino-acid chain; its full sequence is Small ribosomal subunit protein uS8 (133 aa).

This sequence belongs to the universal ribosomal protein uS8 family. As to quaternary structure, part of the 30S ribosomal subunit. Contacts proteins S5 and S12.

Its function is as follows. One of the primary rRNA binding proteins, it binds directly to 16S rRNA central domain where it helps coordinate assembly of the platform of the 30S subunit. This chain is Small ribosomal subunit protein uS8, found in Deinococcus radiodurans (strain ATCC 13939 / DSM 20539 / JCM 16871 / CCUG 27074 / LMG 4051 / NBRC 15346 / NCIMB 9279 / VKM B-1422 / R1).